We begin with the raw amino-acid sequence, 149 residues long: Large ribosomal subunit protein bL9 (149 aa).

Lys89 is subject to N6-acetyllysine.

This sequence belongs to the bacterial ribosomal protein bL9 family.

Its function is as follows. Binds to the 23S rRNA. This Shigella dysenteriae serotype 1 (strain Sd197) protein is Large ribosomal subunit protein bL9.